A 79-amino-acid polypeptide reads, in one-letter code: CDC42 small effector protein 1 (79 aa).

2 S-palmitoyl cysteine lipidation sites follow: C10 and C11. The CRIB domain occupies 30–43 (IGEPMNFVHLTHIG). Residues 48–79 (GAGDGLAMTGAVQEQMRSKGNRDRPWSNSRAL) are disordered. The segment covering 63–72 (MRSKGNRDRP) has biased composition (basic and acidic residues).

The protein belongs to the CDC42SE/SPEC family. Interacts with CDC42 (in GTP-bound form). Interacts weakly with RAC1 and not at all with RHOA.

It is found in the cytoplasm. Its subcellular location is the cytoskeleton. The protein localises to the cell membrane. In terms of biological role, probably involved in the organization of the actin cytoskeleton by acting downstream of CDC42, inducing actin filament assembly. Alters CDC42-induced cell shape changes. In activated T-cells, may play a role in CDC42-mediated F-actin accumulation at the immunological synapse. May play a role in early contractile events in phagocytosis in macrophages. This is CDC42 small effector protein 1 (Cdc42se1) from Rattus norvegicus (Rat).